Reading from the N-terminus, the 177-residue chain is Insertion element IS1223 uncharacterized 20.7 kDa protein (177 aa).

Residues 112 to 131 (KQKGRPRKVPKKSKKTTKKL) form a disordered region. Residues 113–128 (QKGRPRKVPKKSKKTT) show a composition bias toward basic residues.

The protein belongs to the IS150/IS1296 orfA family.

In Lactobacillus johnsonii, this protein is Insertion element IS1223 uncharacterized 20.7 kDa protein.